A 449-amino-acid chain; its full sequence is Endoglucanase A (449 aa).

Residues 1–31 constitute a signal peptide (tat-type signal); the sequence is MSTRRTAAALLAAAAVAVGGLTALTTTAAQA. Residues 32-137 form the CBM2 domain; sequence APGCRVDYAV…SLNGTTCTGT (106 aa). A disulfide bridge links Cys35 with Cys134. The disordered stretch occupies residues 127–170; that stretch reads FSLNGTTCTGTVPTTSPTPTPTPTTPTPTPTPTPTPTPTVTPQP. The segment covering 132 to 141 has biased composition (low complexity); that stretch reads TTCTGTVPTT. A linker ('hinge') (Pro-Thr box) region spans residues 139–168; sequence PTTSPTPTPTPTTPTPTPTPTPTPTPTVTP. A compositionally biased stretch (pro residues) spans 142 to 167; that stretch reads SPTPTPTPTTPTPTPTPTPTPTPTVT. Asp247 is an active-site residue. 2 cysteine pairs are disulfide-bonded: Cys248–Cys291 and Cys390–Cys426. Asp283 acts as the Proton donor in catalysis. Residue Asp423 is the Nucleophile of the active site. The tract at residues 438–449 is catalytic; that stretch reads EIALEMARNARW.

This sequence belongs to the glycosyl hydrolase 6 (cellulase B) family. Post-translationally, the linker region (also termed 'hinge') may be a potential site for proteolysis. Predicted to be exported by the Tat system. The position of the signal peptide cleavage has not been experimentally proven.

The catalysed reaction is Endohydrolysis of (1-&gt;4)-beta-D-glucosidic linkages in cellulose, lichenin and cereal beta-D-glucans.. Its function is as follows. The biological conversion of cellulose to glucose generally requires three types of hydrolytic enzymes: (1) Endoglucanases which cut internal beta-1,4-glucosidic bonds; (2) Exocellobiohydrolases that cut the disaccharide cellobiose from the non-reducing end of the cellulose polymer chain; (3) Beta-1,4-glucosidases which hydrolyze the cellobiose and other short cello-oligosaccharides to glucose. This Cellulomonas fimi protein is Endoglucanase A (cenA).